Reading from the N-terminus, the 356-residue chain is Protein ATP1B4 (356 aa).

The Nuclear portion of the chain corresponds to 1-109; sequence MRRQLRSRRA…SLARTGQSRS (109 aa). The segment at 32–77 is disordered; sequence LADEEEEAEEEAQVMMVPGLEEEEEEEEGKEEEEEREEEEGQGQST. 2 stretches are compositionally biased toward acidic residues: residues 33 to 43 and 51 to 72; these read ADEEEEAEEEA and LEEEEEEEEGKEEEEEREEEEG. The helical; Signal-anchor for type II membrane protein transmembrane segment at 110–130 threads the bilayer; the sequence is LILVIYFFFYASLAAVITLFI. The Perinuclear space portion of the chain corresponds to 131 to 356; the sequence is YMLFLAISPY…RIIFTLNIET (226 aa).

Belongs to the X(+)/potassium ATPases subunit beta family. Does not associate with known Na,K-ATPase alpha-subunits. Associates with a SMAD7-transcriptional complex. Interacts with SNW1 and TOR1AIP1. Expressed in perinatal myocytes (at protein level). Expressed during postnatal development in skeletal muscle and heart.

It localises to the nucleus inner membrane. In terms of biological role, may act as a transcriptional coregulator during muscle development through its interaction with SNW1. Has lost its ancestral function as a Na,K-ATPase beta-subunit. The protein is Protein ATP1B4 (Atp1b4) of Rattus norvegicus (Rat).